Consider the following 88-residue polypeptide: Small ribosomal subunit protein uS17 (88 aa).

The protein belongs to the universal ribosomal protein uS17 family. As to quaternary structure, part of the 30S ribosomal subunit.

One of the primary rRNA binding proteins, it binds specifically to the 5'-end of 16S ribosomal RNA. This is Small ribosomal subunit protein uS17 from Brevibacillus brevis (strain 47 / JCM 6285 / NBRC 100599).